A 936-amino-acid polypeptide reads, in one-letter code: Aftiphilin (936 aa).

The segment at 1–36 (MEPDIIRMYSSSPPPLDNGAEDDDDDEFGEFGGFSE) is disordered. Positions 1–523 (MEPDIIRMYS…ARKSSGTGTE (523 aa)) are interaction with AP1G1, AP1G2, GGA1 and GGA3. The span at 19 to 29 (GAEDDDDDEFG) shows a compositional bias: acidic residues. The WXXF motif 1 motif lies at 28–31 (FGEF). Serine 151 is subject to Phosphoserine. Disordered regions lie at residues 197–216 (TDDL…STHS) and 374–409 (KTSD…LDDS). Positions 374 to 389 (KTSDDEVGSPKEESRK) are enriched in basic and acidic residues. An interaction with AP1G1 region spans residues 386–610 (ESRKFTNFQS…EAWQSHRTDE (225 aa)). Phosphoserine is present on serine 395. The WXXF motif 2 motif lies at 432-435 (FGDF). The WXXF motif 3 (partial) motif lies at 436 to 438 (GDF). The WXXF motif 4 signature appears at 478 to 481 (FGEF). A Phosphoserine modification is found at serine 518. The disordered stretch occupies residues 589-637 (GDQQATESHHRKEAWQSHRTDENIDTPGTPKTHSVPSATSKGAVASGHL). Residues 595-610 (ESHHRKEAWQSHRTDE) are compositionally biased toward basic and acidic residues. A Phosphothreonine modification is found at threonine 617. Positions 617-628 (TPKTHSVPSATS) are enriched in polar residues. Residues 716-718 (YQW) carry the CLTCL1/Clathrin-binding motif. Residues 825–829 (LLNLD) form a clathrin-binding region.

As to quaternary structure, self-associates. Interacts with GGA1 (via GAE domain). Interacts with GGA3 (via GAE domain), AP1G1 (via GAE domain) and AP1G2 (via GAE domain). Component of the aftiphilin/p200/gamma-synergin complex, at least composed of AFTPH/aftiphilin, HEATR5B/p200a and SYNRG/gamma-synergin, which plays a role in the AP1G1/AP-1-mediated protein trafficking from early to recycling endosomes. Within the complex interacts with HEATR5B/p200a and SYNRG/gamma-synergin; the interactions are direct. Interacts with AP1G1/AP-1; the interaction is required to recruit AFTPH/aftiphilin to the perinuclear region of the cell. Interacts with CLTCL1/Clathrin.

The protein localises to the cytoplasm. It is found in the perinuclear region. It localises to the cytoplasmic vesicle. The protein resides in the clathrin-coated vesicle. Component of clathrin-coated vesicles. Component of the aftiphilin/p200/gamma-synergin complex, which plays roles in AP1G1/AP-1-mediated protein trafficking including the trafficking of transferrin from early to recycling endosomes, and the membrane trafficking of furin and the lysosomal enzyme cathepsin D between the trans-Golgi network (TGN) and endosomes. The chain is Aftiphilin (AFTPH) from Homo sapiens (Human).